The primary structure comprises 341 residues: Holliday junction branch migration complex subunit RuvB (341 aa).

Residues 1–180 are large ATPase domain (RuvB-L); sequence MAKSHTLNPE…FGIQLRLDYY (180 aa). Residues leucine 19, arginine 20, glycine 61, lysine 64, threonine 65, threonine 66, arginine 170, tyrosine 180, and arginine 217 each coordinate ATP. Threonine 65 is a binding site for Mg(2+). The segment at 181-251 is small ATPAse domain (RuvB-S); the sequence is NDEEMKQIVL…LCLKAFEKMG (71 aa). The tract at residues 254-341 is head domain (RuvB-H); the sequence is DLGLDGMDRQ…VHHGQDPTLF (88 aa). DNA-binding residues include arginine 309 and arginine 314.

This sequence belongs to the RuvB family. Homohexamer. Forms an RuvA(8)-RuvB(12)-Holliday junction (HJ) complex. HJ DNA is sandwiched between 2 RuvA tetramers; dsDNA enters through RuvA and exits via RuvB. An RuvB hexamer assembles on each DNA strand where it exits the tetramer. Each RuvB hexamer is contacted by two RuvA subunits (via domain III) on 2 adjacent RuvB subunits; this complex drives branch migration. In the full resolvosome a probable DNA-RuvA(4)-RuvB(12)-RuvC(2) complex forms which resolves the HJ.

It is found in the cytoplasm. The enzyme catalyses ATP + H2O = ADP + phosphate + H(+). Functionally, the RuvA-RuvB-RuvC complex processes Holliday junction (HJ) DNA during genetic recombination and DNA repair, while the RuvA-RuvB complex plays an important role in the rescue of blocked DNA replication forks via replication fork reversal (RFR). RuvA specifically binds to HJ cruciform DNA, conferring on it an open structure. The RuvB hexamer acts as an ATP-dependent pump, pulling dsDNA into and through the RuvAB complex. RuvB forms 2 homohexamers on either side of HJ DNA bound by 1 or 2 RuvA tetramers; 4 subunits per hexamer contact DNA at a time. Coordinated motions by a converter formed by DNA-disengaged RuvB subunits stimulates ATP hydrolysis and nucleotide exchange. Immobilization of the converter enables RuvB to convert the ATP-contained energy into a lever motion, pulling 2 nucleotides of DNA out of the RuvA tetramer per ATP hydrolyzed, thus driving DNA branch migration. The RuvB motors rotate together with the DNA substrate, which together with the progressing nucleotide cycle form the mechanistic basis for DNA recombination by continuous HJ branch migration. Branch migration allows RuvC to scan DNA until it finds its consensus sequence, where it cleaves and resolves cruciform DNA. The protein is Holliday junction branch migration complex subunit RuvB of Leptospira interrogans serogroup Icterohaemorrhagiae serovar copenhageni (strain Fiocruz L1-130).